A 590-amino-acid chain; its full sequence is Putative histone-lysine N-methyltransferase PRDM6 (590 aa).

The interval Gln25–Ala87 is disordered. A compositionally biased stretch (gly residues) spans His29–Gly42. The span at Ala71–Ala87 shows a compositional bias: low complexity. Residues Arg241–Asn360 form the SET domain. The C2H2-type 1; degenerate zinc-finger motif lies at Trp468–Gln490. 2 C2H2-type zinc fingers span residues Tyr496–His518 and Phe524–His546. The C2H2-type 4; degenerate zinc-finger motif lies at Phe552–Pro574.

This sequence belongs to the class V-like SAM-binding methyltransferase superfamily. As to quaternary structure, interacts with HDAC1, HDAC2, HDAC3, CBX1 and EP300.

The protein resides in the nucleus. It carries out the reaction L-lysyl(20)-[histone H4] + S-adenosyl-L-methionine = N(6)-methyl-L-lysyl(20)-[histone H4] + S-adenosyl-L-homocysteine + H(+). Functionally, putative histone methyltransferase that acts as a transcriptional repressor of smooth muscle gene expression. Promotes the transition from differentiated to proliferative smooth muscle by suppressing differentiation and maintaining the proliferative potential of vascular smooth muscle cells. Also plays a role in endothelial cells by inhibiting endothelial cell proliferation, survival and differentiation. It is unclear whether it has histone methyltransferase activity in vivo. According to some authors, it does not act as a histone methyltransferase by itself and represses transcription by recruiting EHMT2/G9a. According to others, it possesses histone methyltransferase activity when associated with other proteins and specifically methylates 'Lys-20' of histone H4 in vitro. 'Lys-20' methylation represents a specific tag for epigenetic transcriptional repression. This is Putative histone-lysine N-methyltransferase PRDM6 (PRDM6) from Bos taurus (Bovine).